A 485-amino-acid chain; its full sequence is E3 ubiquitin-protein ligase TRIM34A (485 aa).

The segment at 15–59 (CPVCQELLTKALSLGCGHRVCQACLITKKNAVINPREKSSCPVCG) adopts an RING-type zinc-finger fold. The B box-type zinc finger occupies 91 to 132 (TKRDLCVHHGEKLLLFCKEDKKAICWVCERSQEHRGHHTFLW). Residues Cys96, His99, Cys118, and His124 each contribute to the Zn(2+) site. Positions 136–170 (VRECQENLQKALTRLRKEQEKVETLEADIKEDRLS) form a coiled coil. The B30.2/SPRY domain occupies 282-485 (LSGMLQKFRE…APMTLCPLNS (204 aa)).

It belongs to the TRIM/RBCC family. As to quaternary structure, homotrimer. Interacts (via B-box and SPRY domain) with TRIM5.

It is found in the cytoplasm. It localises to the mitochondrion. The enzyme catalyses S-ubiquitinyl-[E2 ubiquitin-conjugating enzyme]-L-cysteine + [acceptor protein]-L-lysine = [E2 ubiquitin-conjugating enzyme]-L-cysteine + N(6)-ubiquitinyl-[acceptor protein]-L-lysine.. Its pathway is protein modification; protein ubiquitination. In terms of biological role, functions as antiviral protein and contributes to the defense against retroviral infections. Acts as a capsid-specific restriction factor with the help of TRIM5 and prevents infection from non-host-adapted retroviruses. During influenza A virus infection, promotes programmed cell death by targeting ZBP1 for 'Lys-63'-linked polyubiquitination. In turn, promotes ZBP1 recruitment of RIPK3 to mediate virus-induced programmed necrosis. Negatively regulates the function of mitochondria by enhancing mitochondrial depolarization leading to cytochrome c release and mitochondria-dependent apoptosis. Also promotes the formation of multinucleated giant cells by means of cell fusion and phagocytosis in epithelial cells. Plays an essential role in sustaining the integrity of the inner mucus layer in the colon by controlling the exocytosis of the major component of colonic mucus MUC2 from colonic goblet cells. This is E3 ubiquitin-protein ligase TRIM34A from Mus musculus (Mouse).